The following is a 210-amino-acid chain: MASMGLQVMGIALAVLGWLGAILSCALPMWRVTAFIGSNIVTSQTIWEGLWMNCVVQSTGQMQCKVYDSLLALPQDLQAARALMVVSIILAALGVLLSVVGGKCTNCVEDESAKAKTMIVAGVVFLLAGLLVMVPASWTANNIIRDFYNPLVVSGQKREMGASLYVGWAASGLLLLGGALLCCNCPPRADKPYSAKYSAAARSAPASNYV.

Residues 1–7 lie on the Cytoplasmic side of the membrane; sequence MASMGLQ. Residues 1–103 are interaction with EPHA2; it reads MASMGLQVMG…GVLLSVVGGK (103 aa). A helical transmembrane segment spans residues 8-28; it reads VMGIALAVLGWLGAILSCALP. The Extracellular segment spans residues 29 to 81; sequence MWRVTAFIGSNIVTSQTIWEGLWMNCVVQSTGQMQCKVYDSLLALPQDLQAAR. A disulfide bridge links Cys54 with Cys64. Residues 82 to 102 traverse the membrane as a helical segment; sequence ALMVVSIILAALGVLLSVVGG. At 103–117 the chain is on the cytoplasmic side; the sequence is KCTNCVEDESAKAKT. The chain crosses the membrane as a helical span at residues 118-138; it reads MIVAGVVFLLAGLLVMVPASW. Topologically, residues 139–160 are extracellular; that stretch reads TANNIIRDFYNPLVVSGQKREM. The chain crosses the membrane as a helical span at residues 161–181; it reads GASLYVGWAASGLLLLGGALL. The Cytoplasmic portion of the chain corresponds to 182 to 210; sequence CCNCPPRADKPYSAKYSAAARSAPASNYV. The residue at position 209 (Tyr209) is a Phosphotyrosine. The segment at 209–210 is interactions with TJP1, TJP2 and TJP3; the sequence is YV.

It belongs to the claudin family. As to quaternary structure, can form heteropolymeric strands with other claudins. Interacts with CLDN8. Interacts with CLDN1. Directly interacts with TJP1/ZO-1. Interacts with TJP2/ZO-2 and TJP3/ZO-3. Interacts with EPHA2; phosphorylates CLDN4 and may regulate tight junctions. Phosphorylated. Phosphorylation by EPHA2 is stimulated by EFNA1 and alters interaction with TJP1.

It localises to the cell junction. The protein localises to the tight junction. It is found in the cell membrane. It catalyses the reaction chloride(in) = chloride(out). The enzyme catalyses bromide(in) = bromide(out). It carries out the reaction iodide(out) = iodide(in). The catalysed reaction is fluoride(in) = fluoride(out). Can associate with other claudins to regulate tight junction structural and functional strand dynamics. May coassemble with CLDN8 into tight junction strands containing anion-selective channels that convey paracellular chloride permeability in renal collecting ducts. May integrate into CLDN3 strands to modulate localized tight junction barrier properties. May disrupt strand assembly of channel-forming CLDN2 and CLDN15 and inhibit cation conductance. Cannot form tight junction strands on its own. The sequence is that of Claudin-4 (CLDN4) from Canis lupus familiaris (Dog).